The chain runs to 399 residues: tRNA-dihydrouridine(16/17) synthase [NAD(P)(+)] (399 aa).

FMN is bound by residues 24-26 (PMV) and glutamine 80. Cysteine 109 serves as the catalytic Proton donor. FMN contacts are provided by residues lysine 148, histidine 176, 211–213 (NGN), and 235–236 (AE).

Belongs to the Dus family. Dus1 subfamily. FMN is required as a cofactor.

It is found in the nucleus. Its subcellular location is the mitochondrion. The catalysed reaction is 5,6-dihydrouridine(16) in tRNA + NADP(+) = uridine(16) in tRNA + NADPH + H(+). The enzyme catalyses 5,6-dihydrouridine(16) in tRNA + NAD(+) = uridine(16) in tRNA + NADH + H(+). It carries out the reaction 5,6-dihydrouridine(17) in tRNA + NAD(+) = uridine(17) in tRNA + NADH + H(+). It catalyses the reaction 5,6-dihydrouridine(17) in tRNA + NADP(+) = uridine(17) in tRNA + NADPH + H(+). The catalysed reaction is a 5,6-dihydrouridine in mRNA + NAD(+) = a uridine in mRNA + NADH + H(+). The enzyme catalyses a 5,6-dihydrouridine in mRNA + NADP(+) = a uridine in mRNA + NADPH + H(+). In terms of biological role, catalyzes the synthesis of dihydrouridine, a modified base found in the D-loop of most tRNAs. Also able to mediate dihydrouridylation of some mRNAs, thereby affecting their translation. The protein is tRNA-dihydrouridine(16/17) synthase [NAD(P)(+)] of Schizosaccharomyces pombe (strain 972 / ATCC 24843) (Fission yeast).